A 228-amino-acid chain; its full sequence is ATP-dependent dethiobiotin synthetase BioD (228 aa).

13–18 (DVGKTV) lines the ATP pocket. Thr17 contacts Mg(2+). The active site involves Lys38. ATP contacts are provided by residues Asp55, 116–119 (EGAG), 176–177 (NR), and 205–207 (PYI). Mg(2+)-binding residues include Asp55 and Glu116.

The protein belongs to the dethiobiotin synthetase family. As to quaternary structure, homodimer. Mg(2+) is required as a cofactor.

The protein resides in the cytoplasm. The enzyme catalyses (7R,8S)-7,8-diammoniononanoate + CO2 + ATP = (4R,5S)-dethiobiotin + ADP + phosphate + 3 H(+). Its pathway is cofactor biosynthesis; biotin biosynthesis; biotin from 7,8-diaminononanoate: step 1/2. Functionally, catalyzes a mechanistically unusual reaction, the ATP-dependent insertion of CO2 between the N7 and N8 nitrogen atoms of 7,8-diaminopelargonic acid (DAPA, also called 7,8-diammoniononanoate) to form a ureido ring. This is ATP-dependent dethiobiotin synthetase BioD from Vibrio parahaemolyticus serotype O3:K6 (strain RIMD 2210633).